Consider the following 143-residue polypeptide: Anti-sigma F factor (143 aa).

Belongs to the anti-sigma-factor family.

It catalyses the reaction L-seryl-[protein] + ATP = O-phospho-L-seryl-[protein] + ADP + H(+). It carries out the reaction L-threonyl-[protein] + ATP = O-phospho-L-threonyl-[protein] + ADP + H(+). Binds to sigma F and blocks its ability to form an RNA polymerase holoenzyme (E-sigma F). Phosphorylates SpoIIAA on a serine residue. This phosphorylation may enable SpoIIAA to act as an anti-anti-sigma factor that counteracts SpoIIAB and thus releases sigma F from inhibition. This Clostridium acetobutylicum (strain ATCC 824 / DSM 792 / JCM 1419 / IAM 19013 / LMG 5710 / NBRC 13948 / NRRL B-527 / VKM B-1787 / 2291 / W) protein is Anti-sigma F factor.